The chain runs to 309 residues: Elongation factor Ts (309 aa).

The segment at 82–85 is involved in Mg(2+) ion dislocation from EF-Tu; the sequence is TDFV.

Belongs to the EF-Ts family.

The protein resides in the cytoplasm. Its function is as follows. Associates with the EF-Tu.GDP complex and induces the exchange of GDP to GTP. It remains bound to the aminoacyl-tRNA.EF-Tu.GTP complex up to the GTP hydrolysis stage on the ribosome. This is Elongation factor Ts from Rickettsia felis (strain ATCC VR-1525 / URRWXCal2) (Rickettsia azadi).